A 394-amino-acid polypeptide reads, in one-letter code: Venom metalloproteinase antarease TserMP_A (394 aa).

The N-terminal stretch at 1 to 16 is a signal peptide; the sequence is MISYLASIFLLATVSA. Residues 17-157 constitute a propeptide that is removed on maturation; it reads VPSGRVEVVF…NAENVSRMAR (141 aa). The 230-residue stretch at 162 to 391 folds into the Peptidase M12B domain; the sequence is IVVEYYIVTD…PTASCIFQQC (230 aa). A disulfide bridge links Cys-295 with Cys-386. His-319 serves as a coordination point for Zn(2+). The active site involves Glu-320. His-323 and His-329 together coordinate Zn(2+).

Zn(2+) serves as cofactor. Post-translationally, contains 4 disulfide bonds. Expressed by the venom gland.

The protein resides in the secreted. Inhibited by EDTA. Functionally, acts as a metalloprotease. Penetrates intact tissue and specifically cleaves the vesicle-associated membrane protein 2 (VAMP2) (part of the SNARE complex) involved in pancreatic secretion, thus disrupting the normal vesicular traffic. The sequence is that of Venom metalloproteinase antarease TserMP_A from Tityus serrulatus (Brazilian scorpion).